Here is a 491-residue protein sequence, read N- to C-terminus: 2,3-bisphosphoglycerate-independent phosphoglycerate mutase (491 aa).

Mn(2+)-binding residues include Asp-11 and Ser-61. The active-site Phosphoserine intermediate is the Ser-61. Substrate is bound by residues His-118, 147-148 (RD), Arg-177, Arg-183, 247-250 (RNDR), and Lys-320. Residues Asp-386, His-390, Asp-427, His-428, and His-445 each coordinate Mn(2+).

It belongs to the BPG-independent phosphoglycerate mutase family. In terms of assembly, monomer. Requires Mn(2+) as cofactor.

The enzyme catalyses (2R)-2-phosphoglycerate = (2R)-3-phosphoglycerate. It participates in carbohydrate degradation; glycolysis; pyruvate from D-glyceraldehyde 3-phosphate: step 3/5. In terms of biological role, catalyzes the interconversion of 2-phosphoglycerate and 3-phosphoglycerate. The chain is 2,3-bisphosphoglycerate-independent phosphoglycerate mutase from Helicobacter pylori (strain ATCC 700392 / 26695) (Campylobacter pylori).